We begin with the raw amino-acid sequence, 281 residues long: NADPH-dependent 7-cyano-7-deazaguanine reductase (281 aa).

87–89 contributes to the substrate binding site; that stretch reads IES. 89 to 90 provides a ligand contact to NADPH; sequence SK. Residue Cys-188 is the Thioimide intermediate of the active site. Asp-195 functions as the Proton donor in the catalytic mechanism. 227 to 228 contacts substrate; sequence HE. An NADPH-binding site is contributed by 256–257; the sequence is RG. The interval 261–281 is disordered; that stretch reads INPYRSTEQAKPDHNHRMARQ. A compositionally biased stretch (basic and acidic residues) spans 268–281; it reads EQAKPDHNHRMARQ.

The protein belongs to the GTP cyclohydrolase I family. QueF type 2 subfamily. As to quaternary structure, homodimer.

Its subcellular location is the cytoplasm. It carries out the reaction 7-aminomethyl-7-carbaguanine + 2 NADP(+) = 7-cyano-7-deazaguanine + 2 NADPH + 3 H(+). It functions in the pathway tRNA modification; tRNA-queuosine biosynthesis. Functionally, catalyzes the NADPH-dependent reduction of 7-cyano-7-deazaguanine (preQ0) to 7-aminomethyl-7-deazaguanine (preQ1). The protein is NADPH-dependent 7-cyano-7-deazaguanine reductase of Vibrio vulnificus (strain YJ016).